Consider the following 154-residue polypeptide: Ribosomal RNA large subunit methyltransferase H (154 aa).

Residues Leu70, Gly102, and 121-126 (LSRLTF) each bind S-adenosyl-L-methionine.

It belongs to the RNA methyltransferase RlmH family. In terms of assembly, homodimer.

The protein resides in the cytoplasm. The catalysed reaction is pseudouridine(1915) in 23S rRNA + S-adenosyl-L-methionine = N(3)-methylpseudouridine(1915) in 23S rRNA + S-adenosyl-L-homocysteine + H(+). In terms of biological role, specifically methylates the pseudouridine at position 1915 (m3Psi1915) in 23S rRNA. This chain is Ribosomal RNA large subunit methyltransferase H, found in Geobacter metallireducens (strain ATCC 53774 / DSM 7210 / GS-15).